The following is a 229-amino-acid chain: MSLLAQLDQKIAANGGLIVSCQPVPDSPLDKPEIVAAMALAAEQAGAVAIRIEGVANLQATRAVVSVPIIGIVKRDLEDSPVRITAYIEDVDALAQAGADIIAIDGTDRPRPVPVETLLARIHHHGLLAMTDCSTPEDGLACQKLGAEIIGTTLSGYTTPETPEEPDLTLVKRLSDAGCRVIAEGRYNTPAQAADAMRHGAWAVTVGSAITRLEHICQWYNTAMKKAVL.

Belongs to the NanE family.

It catalyses the reaction an N-acyl-D-glucosamine 6-phosphate = an N-acyl-D-mannosamine 6-phosphate. It participates in amino-sugar metabolism; N-acetylneuraminate degradation; D-fructose 6-phosphate from N-acetylneuraminate: step 3/5. In terms of biological role, converts N-acetylmannosamine-6-phosphate (ManNAc-6-P) to N-acetylglucosamine-6-phosphate (GlcNAc-6-P). The protein is Putative N-acetylmannosamine-6-phosphate 2-epimerase of Escherichia coli O157:H7.